A 458-amino-acid chain; its full sequence is Cysteine--tRNA ligase (458 aa).

Zn(2+) is bound at residue Cys-28. A 'HIGH' region motif is present at residues 30–40 (VTVYDLCHFGH). Cys-209, His-234, and Glu-238 together coordinate Zn(2+). A 'KMSKS' region motif is present at residues 266-270 (KMSKS). Lys-269 lines the ATP pocket.

Belongs to the class-I aminoacyl-tRNA synthetase family. As to quaternary structure, monomer. Zn(2+) serves as cofactor.

The protein resides in the cytoplasm. It catalyses the reaction tRNA(Cys) + L-cysteine + ATP = L-cysteinyl-tRNA(Cys) + AMP + diphosphate. This Mannheimia succiniciproducens (strain KCTC 0769BP / MBEL55E) protein is Cysteine--tRNA ligase.